A 195-amino-acid chain; its full sequence is Sec-independent protein translocase protein TatB (195 aa).

A helical membrane pass occupies residues 2 to 22 (FSNVGWGEVLVLLIVALFLIG). Over residues 103–125 (VKDTVDTVRKPNLRESLKADKTK) the composition is skewed to basic and acidic residues. A disordered region spans residues 103–195 (VKDTVDTVRK…APGYGWEDVT (93 aa)). 2 stretches are compositionally biased toward polar residues: residues 127 to 139 (SAQPQPSLASGSA) and 146 to 155 (VTQQSNAGES).

It belongs to the TatB family. The Tat system comprises two distinct complexes: a TatABC complex, containing multiple copies of TatA, TatB and TatC subunits, and a separate TatA complex, containing only TatA subunits. Substrates initially bind to the TatABC complex, which probably triggers association of the separate TatA complex to form the active translocon.

It is found in the cell membrane. In terms of biological role, part of the twin-arginine translocation (Tat) system that transports large folded proteins containing a characteristic twin-arginine motif in their signal peptide across membranes. Together with TatC, TatB is part of a receptor directly interacting with Tat signal peptides. TatB may form an oligomeric binding site that transiently accommodates folded Tat precursor proteins before their translocation. The protein is Sec-independent protein translocase protein TatB of Corynebacterium jeikeium (strain K411).